Reading from the N-terminus, the 436-residue chain is 3-ketoacyl-CoA thiolase (436 aa).

The Acyl-thioester intermediate role is filled by C99. Active-site proton acceptor residues include H392 and C422.

Belongs to the thiolase-like superfamily. Thiolase family. Heterotetramer of two alpha chains (FadJ) and two beta chains (FadI).

The protein resides in the cytoplasm. It catalyses the reaction an acyl-CoA + acetyl-CoA = a 3-oxoacyl-CoA + CoA. It functions in the pathway lipid metabolism; fatty acid beta-oxidation. Its function is as follows. Catalyzes the final step of fatty acid oxidation in which acetyl-CoA is released and the CoA ester of a fatty acid two carbons shorter is formed. In Shewanella sp. (strain W3-18-1), this protein is 3-ketoacyl-CoA thiolase.